Consider the following 390-residue polypeptide: tRNA(Met) cytidine acetate ligase (390 aa).

Residues 7 to 20 (ITEY…HIYH), Gly-101, Asn-152, and Arg-177 contribute to the ATP site.

Belongs to the TmcAL family.

The protein resides in the cytoplasm. It catalyses the reaction cytidine(34) in elongator tRNA(Met) + acetate + ATP = N(4)-acetylcytidine(34) in elongator tRNA(Met) + AMP + diphosphate. Its function is as follows. Catalyzes the formation of N(4)-acetylcytidine (ac(4)C) at the wobble position of elongator tRNA(Met), using acetate and ATP as substrates. First activates an acetate ion to form acetyladenylate (Ac-AMP) and then transfers the acetyl group to tRNA to form ac(4)C34. In Leuconostoc mesenteroides subsp. mesenteroides (strain ATCC 8293 / DSM 20343 / BCRC 11652 / CCM 1803 / JCM 6124 / NCDO 523 / NBRC 100496 / NCIMB 8023 / NCTC 12954 / NRRL B-1118 / 37Y), this protein is tRNA(Met) cytidine acetate ligase.